Reading from the N-terminus, the 337-residue chain is Putative carboxypeptidase TP_0688 (337 aa).

The Nucleophile role is filled by Ser118. Active-site charge relay system residues include Glu234 and His302.

Belongs to the peptidase S66 family.

This is Putative carboxypeptidase TP_0688 from Treponema pallidum (strain Nichols).